Consider the following 600-residue polypeptide: Albumin (600 aa).

The first 10 residues, 1-10 (LLFLFSSAYS), serve as a signal peptide directing secretion. A propeptide spanning residues 11–16 (RGVFRR) is cleaved from the precursor. 3 consecutive Albumin domains span residues 11 to 202 (RGVF…DELR), 203 to 395 (DEGK…EFQP), and 396 to 593 (LVEE…KFVA). Histidine 19 provides a ligand contact to Cu cation. Serine 21 is modified (phosphoserine). Ca(2+) contacts are provided by glutamate 22 and aspartate 29. The cysteines at positions 69 and 78 are disulfide-linked. 2 positions are modified to phosphoserine: serine 74 and serine 81. Zn(2+) is bound at residue histidine 83. 6 cysteine pairs are disulfide-bonded: cysteine 91–cysteine 107, cysteine 106–cysteine 117, cysteine 140–cysteine 185, cysteine 184–cysteine 193, cysteine 216–cysteine 262, and cysteine 261–cysteine 269. A Phosphothreonine modification is found at threonine 99. N6-succinyllysine is present on lysine 221. Lysine 256 is a (4Z,15Z)-bilirubin IXalpha binding site. Glutamate 260 is a Ca(2+) binding site. Zn(2+) is bound by residues histidine 263 and aspartate 265. Residues aspartate 265, glutamate 268, aspartate 271, and aspartate 275 each contribute to the Ca(2+) site. Intrachain disulfides connect cysteine 281/cysteine 295, cysteine 294/cysteine 305, cysteine 332/cysteine 377, cysteine 376/cysteine 385, cysteine 408/cysteine 454, cysteine 453/cysteine 464, cysteine 477/cysteine 493, and cysteine 492/cysteine 503. At serine 289 the chain carries Phosphoserine. Phosphoserine is present on serine 435. Phosphothreonine is present on residues threonine 436 and threonine 438. Residue lysine 452 is modified to N6-succinyllysine. Position 505 is a phosphoserine (serine 505). Intrachain disulfides connect cysteine 530–cysteine 575 and cysteine 574–cysteine 583. At lysine 535 the chain carries N6-succinyllysine. Lysine 550 carries the post-translational modification N6-methyllysine. Lysine 580 bears the N6-succinyllysine mark.

It belongs to the ALB/AFP/VDB family. In terms of assembly, interacts with FCGRT; this interaction regulates ALB homeostasis. Interacts with TASOR. In plasma, occurs in a covalently-linked complex with chromophore-bound alpha-1-microglobulin; this interaction does not prevent fatty acid binding to ALB. In terms of processing, phosphorylated by FAM20C in the extracellular medium. As to expression, plasma.

Its subcellular location is the secreted. In terms of biological role, binds water, Ca(2+), Na(+), K(+), fatty acids, hormones, bilirubin and drugs. Its main function is the regulation of the colloidal osmotic pressure of blood. Major zinc transporter in plasma, typically binds about 80% of all plasma zinc. Major calcium and magnesium transporter in plasma, binds approximately 45% of circulating calcium and magnesium in plasma. Potentially has more than two calcium-binding sites and might additionally bind calcium in a non-specific manner. The shared binding site between zinc and calcium at residue Asp-265 suggests a crosstalk between zinc and calcium transport in the blood. The rank order of affinity is zinc &gt; calcium &gt; magnesium. Binds to the bacterial siderophore enterobactin and inhibits enterobactin-mediated iron uptake of E.coli from ferric transferrin, and may thereby limit the utilization of iron and growth of enteric bacteria such as E.coli. Does not prevent iron uptake by the bacterial siderophore aerobactin. The polypeptide is Albumin (ALB) (Macaca mulatta (Rhesus macaque)).